Here is a 711-residue protein sequence, read N- to C-terminus: Nuclear intron maturase 1, mitochondrial (711 aa).

A Reverse transcriptase domain is found at 147–459; it reads KDKISMNGGE…RGIQFLDHII (313 aa). Residues 484-653 are intron maturase type-2; that stretch reads GTLLSVSASL…QVLQEYIRLQ (170 aa).

This sequence belongs to the plant nuclear intron maturase (nMat) family. As to expression, expressed at low levels in seedlings and accumulates in adult plants.

The protein resides in the mitochondrion. Functionally, nuclear-encoded maturase required for splicing of group-II introns in mitochondria. Necessary for mitochondrial biogenesis during early developmental stages. Involved in the splicing of mitochondrial NAD4 transcripts. Required for trans-splicing of NAD1 intron 1 and also functions in cis-splicing of NAD2 intron 1 and NAD4 intron 2. Required for the regulation of fundamental metabolic pathways such as amino acid metabolism, triacylglycerol degradation and polysaccharide synthesis (cellulose and starch) during the early stage of plant growth. Implicated in stress responses. The protein is Nuclear intron maturase 1, mitochondrial of Arabidopsis thaliana (Mouse-ear cress).